Reading from the N-terminus, the 191-residue chain is Protein Ves (191 aa).

This sequence belongs to the Ves family.

This is Protein Ves from Escherichia coli (strain UTI89 / UPEC).